Here is a 137-residue protein sequence, read N- to C-terminus: Large ribosomal subunit protein uL16 (137 aa).

The protein belongs to the universal ribosomal protein uL16 family. As to quaternary structure, part of the 50S ribosomal subunit.

Binds 23S rRNA and is also seen to make contacts with the A and possibly P site tRNAs. This chain is Large ribosomal subunit protein uL16, found in Ruegeria pomeroyi (strain ATCC 700808 / DSM 15171 / DSS-3) (Silicibacter pomeroyi).